The primary structure comprises 204 residues: High frequency lysogenization protein HflD homolog (204 aa).

Belongs to the HflD family.

It is found in the cytoplasm. It localises to the cell inner membrane. The polypeptide is High frequency lysogenization protein HflD homolog (Shewanella amazonensis (strain ATCC BAA-1098 / SB2B)).